Consider the following 131-residue polypeptide: Outer membrane protein assembly factor BamE (131 aa).

An N-terminal signal peptide occupies residues 1–16 (MRNLLLVAAVALSTAG). Cys17 is lipidated: N-palmitoyl cysteine. Cys17 carries S-diacylglycerol cysteine lipidation. The disordered stretch occupies residues 112 to 131 (SAPKQFGRNLARDKKKQRGR).

It belongs to the BamE family. Part of the Bam complex.

It is found in the cell outer membrane. Functionally, part of the outer membrane protein assembly complex, which is involved in assembly and insertion of beta-barrel proteins into the outer membrane. The chain is Outer membrane protein assembly factor BamE from Xanthomonas campestris pv. campestris (strain ATCC 33913 / DSM 3586 / NCPPB 528 / LMG 568 / P 25).